We begin with the raw amino-acid sequence, 116 residues long: Large ribosomal subunit protein bL19 (116 aa).

The protein belongs to the bacterial ribosomal protein bL19 family.

In terms of biological role, this protein is located at the 30S-50S ribosomal subunit interface and may play a role in the structure and function of the aminoacyl-tRNA binding site. This Clostridium beijerinckii (strain ATCC 51743 / NCIMB 8052) (Clostridium acetobutylicum) protein is Large ribosomal subunit protein bL19.